A 184-amino-acid polypeptide reads, in one-letter code: Protein GrpE (184 aa).

Residues 1–32 form a disordered region; it reads MEEQKQTPSTPTPDTAAEAAVNAATAAPETAG. The span at 12–32 shows a compositional bias: low complexity; the sequence is TPDTAAEAAVNAATAAPETAG.

Belongs to the GrpE family. As to quaternary structure, homodimer.

The protein resides in the cytoplasm. Functionally, participates actively in the response to hyperosmotic and heat shock by preventing the aggregation of stress-denatured proteins, in association with DnaK and GrpE. It is the nucleotide exchange factor for DnaK and may function as a thermosensor. Unfolded proteins bind initially to DnaJ; upon interaction with the DnaJ-bound protein, DnaK hydrolyzes its bound ATP, resulting in the formation of a stable complex. GrpE releases ADP from DnaK; ATP binding to DnaK triggers the release of the substrate protein, thus completing the reaction cycle. Several rounds of ATP-dependent interactions between DnaJ, DnaK and GrpE are required for fully efficient folding. This Cupriavidus pinatubonensis (strain JMP 134 / LMG 1197) (Cupriavidus necator (strain JMP 134)) protein is Protein GrpE.